The chain runs to 299 residues: Putative peptidyl-prolyl cis-trans isomerase jhp_0161 (299 aa).

A signal peptide spans 1 to 21 (MKKNILNLALVGALSASFLMA). Positions 154 to 253 (KQEAHARHIL…FGYHIIYLIS (100 aa)) constitute a PpiC domain.

The catalysed reaction is [protein]-peptidylproline (omega=180) = [protein]-peptidylproline (omega=0). The polypeptide is Putative peptidyl-prolyl cis-trans isomerase jhp_0161 (Helicobacter pylori (strain J99 / ATCC 700824) (Campylobacter pylori J99)).